Reading from the N-terminus, the 228-residue chain is Phosphatidate cytidylyltransferase (228 aa).

The next 6 membrane-spanning stretches (helical) occupy residues 31-51, 65-85, 93-113, 131-151, 165-185, and 206-226; these read FVVA…LVGL, IHYL…LIFL, LVIM…MIGG, WTGL…VSLI, IYLF…DLFI, and GVLD…GINI.

Belongs to the CDS family.

It localises to the cell membrane. It catalyses the reaction a 1,2-diacyl-sn-glycero-3-phosphate + CTP + H(+) = a CDP-1,2-diacyl-sn-glycerol + diphosphate. Its pathway is phospholipid metabolism; CDP-diacylglycerol biosynthesis; CDP-diacylglycerol from sn-glycerol 3-phosphate: step 3/3. In Rickettsia typhi (strain ATCC VR-144 / Wilmington), this protein is Phosphatidate cytidylyltransferase (cdsA).